The sequence spans 428 residues: G2/mitotic-specific cyclin-B (428 aa).

Belongs to the cyclin family. Cyclin AB subfamily. Interacts with the CDC2 protein kinase to form a serine/threonine kinase holoenzyme complex also known as maturation promoting factor (MPF). The cyclin subunit imparts substrate specificity to the complex.

Essential for the control of the cell cycle at the G2/M (mitosis) transition. This chain is G2/mitotic-specific cyclin-B, found in Spisula solidissima (Atlantic surf-clam).